We begin with the raw amino-acid sequence, 646 residues long: Acetyl-coenzyme A synthetase (646 aa).

Residues 190–193 (RAGK) and T309 contribute to the CoA site. ATP-binding positions include 385-387 (GEP), 409-414 (DTWWQT), D498, and R513. S521 contacts CoA. Residue R524 participates in ATP binding. 3 residues coordinate Mg(2+): V535, H537, and V540. Residue R582 coordinates CoA. An N6-acetyllysine modification is found at K607.

Belongs to the ATP-dependent AMP-binding enzyme family. Requires Mg(2+) as cofactor. Acetylated. Deacetylation by the SIR2-homolog deacetylase activates the enzyme.

It carries out the reaction acetate + ATP + CoA = acetyl-CoA + AMP + diphosphate. Functionally, catalyzes the conversion of acetate into acetyl-CoA (AcCoA), an essential intermediate at the junction of anabolic and catabolic pathways. AcsA undergoes a two-step reaction. In the first half reaction, AcsA combines acetate with ATP to form acetyl-adenylate (AcAMP) intermediate. In the second half reaction, it can then transfer the acetyl group from AcAMP to the sulfhydryl group of CoA, forming the product AcCoA. The chain is Acetyl-coenzyme A synthetase from Pseudoalteromonas atlantica (strain T6c / ATCC BAA-1087).